The chain runs to 723 residues: Epidermal growth factor receptor kinase substrate 8-like protein 1 (723 aa).

The PTB domain maps to 35 to 164 (QYPVNHLVTF…LHNYRSGRGE (130 aa)). Residues 162–183 (RGERRAAALRATQEELQRDRSP) are compositionally biased toward basic and acidic residues. Disordered regions lie at residues 162-247 (RGER…PRGP), 442-477 (KQLQ…LESE), 537-589 (GPRL…GLDP), and 609-636 (LAQG…GSDA). Ser-182 carries the post-translational modification Phosphoserine. Thr-187 carries the post-translational modification Phosphothreonine. The region spanning 478–537 (TAGKWVLCNYDFQARNSSELSVKQRDVLEVLDDSRKWWKVRDPAGQEGYVPYNILTPYPG) is the SH3 domain. The span at 543–552 (SQSPARSLNS) shows a compositional bias: polar residues. Over residues 553–568 (TPPPPPAPAPAPPPAL) the composition is skewed to pro residues. The segment covering 571 to 580 (PRWDRPRWDS) has biased composition (basic and acidic residues). Residues 689-719 (VQRSLLEDKEKVSELEAVMEKQKKKVEGEVE) are a coiled coil.

It belongs to the EPS8 family. In terms of assembly, interacts with ABI1. Part of a complex that contains SOS1, ABI1 and EPS8L2. Associates with F-actin. Detected in placenta.

Its subcellular location is the cytoplasm. Stimulates guanine exchange activity of SOS1. May play a role in membrane ruffling and remodeling of the actin cytoskeleton. This Homo sapiens (Human) protein is Epidermal growth factor receptor kinase substrate 8-like protein 1 (EPS8L1).